Here is a 217-residue protein sequence, read N- to C-terminus: MATGSHTTTLLLAVALLGLPWPQEAGAFPAMPLSSLFANAVLRAQHLHQLAADTYKEFERAYIPEGQRYSIQNTQAAFCFSETIPAPTGKDEAQQRSDMELLRFSLLLIQSWLGPVQLLSRVFTNSLVLGTLDRVYEKLKDLEEGIQALMRELEDGSPRVGQILKQTYDKFDTNLRSDDALLKNYGLLSCFKKDLHKAETYLRVMKCRRFVESSCAF.

The first 26 residues, 1-26 (MATGSHTTTLLLAVALLGLPWPQEAG), serve as a signal peptide directing secretion. His-46 lines the Zn(2+) pocket. Residues Cys-79 and Cys-190 are joined by a disulfide bond. Glu-199 contributes to the Zn(2+) binding site. A disulfide bridge connects residues Cys-207 and Cys-215.

It belongs to the somatotropin/prolactin family.

The protein resides in the secreted. In terms of biological role, plays an important role in growth control. Its major role in stimulating body growth is to stimulate the liver and other tissues to secrete IGF1. It stimulates both the differentiation and proliferation of myoblasts. It also stimulates amino acid uptake and protein synthesis in muscle and other tissues. This Galago senegalensis (Northern lesser bushbaby) protein is Somatotropin (GH1).